The primary structure comprises 448 residues: Phosphoglucosamine mutase (448 aa).

Ser-108 serves as the catalytic Phosphoserine intermediate. Mg(2+) is bound by residues Ser-108, Asp-247, Asp-249, and Asp-251. Ser-108 carries the post-translational modification Phosphoserine.

This sequence belongs to the phosphohexose mutase family. The cofactor is Mg(2+). In terms of processing, activated by phosphorylation.

It catalyses the reaction alpha-D-glucosamine 1-phosphate = D-glucosamine 6-phosphate. Its function is as follows. Catalyzes the conversion of glucosamine-6-phosphate to glucosamine-1-phosphate. This chain is Phosphoglucosamine mutase, found in Herminiimonas arsenicoxydans.